Consider the following 77-residue polypeptide: Conotoxin G11.1 (77 aa).

The first 20 residues, 1-20, serve as a signal peptide directing secretion; that stretch reads MKLFLAIVLILMLQFLSTGA. Residues 21–45 constitute a propeptide that is removed on maturation; the sequence is ETSDNHASRSTTALRDWLLGPKAKR. Intrachain disulfides connect cysteine 46–cysteine 60, cysteine 53–cysteine 65, cysteine 59–cysteine 69, and cysteine 64–cysteine 76.

This sequence belongs to the conotoxin I3 superfamily. Expressed by the venom duct.

The protein resides in the secreted. In terms of biological role, may embed in the membrane and bind to the voltage sensor domain of a ion channel. Does not induce paralysis when injected in fish, leading to the hypothesis that it may be part of the sedative nirvana cabal. This chain is Conotoxin G11.1, found in Conus geographus (Geography cone).